The chain runs to 381 residues: Complement decay-accelerating factor (381 aa).

Positions 1–34 (MTVARPSVPAALPLLGELPRLLLLVLLCLPAVWG) are cleaved as a signal peptide. 4 Sushi domains span residues 35–96 (DCGL…FCNR), 96–160 (RSCE…FCKK), 161–222 (KSCP…ECRE), and 223–285 (IYCP…ECRG). 2 cysteine pairs are disulfide-bonded: Cys-36/Cys-81 and Cys-65/Cys-94. Residue Asn-95 is glycosylated (N-linked (GlcNAc...) asparagine). Intrachain disulfides connect Cys-98/Cys-145, Cys-129/Cys-158, Cys-163/Cys-204, Cys-190/Cys-220, Cys-225/Cys-267, and Cys-253/Cys-283. A disordered region spans residues 277–354 (SGPPPECRGK…PNKGSGTTSG (78 aa)). Residues 287–309 (SLTSKVPPTVQKPTTVNVPTTEV) show a composition bias toward polar residues. The segment covering 310–328 (SPTSQKTTTKTTTPNAQAT) has biased composition (low complexity). A lipid anchor (GPI-anchor amidated serine) is attached at Ser-353. A propeptide spans 354 to 381 (GTTRLLSGHTCFTLTGLLGTLVTMGLLT) (removed in mature form).

It belongs to the receptors of complement activation (RCA) family. In terms of assembly, monomer (major form) and non-disulfide-linked, covalent homodimer (minor form). Interacts with ADGRE5. (Microbial infection) Interacts with coxsackievirus A21, coxsackieviruses B1, B3 and B5 capsid proteins. As to quaternary structure, (Microbial infection) Interacts with human enterovirus 70 and D68 capsid proteins. In terms of assembly, (Microbial infection) Interacts with human echoviruses 6, 7, 11, 12, 20 and 21 capsid proteins. In terms of processing, the Ser/Thr-rich domain is heavily O-glycosylated. Expressed on the plasma membranes of all cell types that are in intimate contact with plasma complement proteins. It is also found on the surfaces of epithelial cells lining extracellular compartments, and variants of the molecule are present in body fluids and in extracellular matrix.

It localises to the cell membrane. The protein localises to the secreted. Functionally, this protein recognizes C4b and C3b fragments that condense with cell-surface hydroxyl or amino groups when nascent C4b and C3b are locally generated during C4 and c3 activation. Interaction of daf with cell-associated C4b and C3b polypeptides interferes with their ability to catalyze the conversion of C2 and factor B to enzymatically active C2a and Bb and thereby prevents the formation of C4b2a and C3bBb, the amplification convertases of the complement cascade. Inhibits complement activation by destabilizing and preventing the formation of C3 and C5 convertases, which prevents complement damage. In terms of biological role, (Microbial infection) Acts as a receptor for Coxsackievirus A21, coxsackieviruses B1, B3 and B5. (Microbial infection) Acts as a receptor for Human enterovirus 70 and D68. Its function is as follows. (Microbial infection) Acts as a receptor for Human echoviruses 6, 7, 11, 12, 20 and 21. This is Complement decay-accelerating factor (CD55) from Homo sapiens (Human).